The following is a 57-amino-acid chain: MLKWAIIFFVISLIAGFFGFSGVSAATATIARVLFAIFLIVFLVFLILAVMAGNAVL.

The next 2 helical transmembrane spans lie at 4–24 (WAII…SGVS) and 33–53 (VLFA…VMAG).

It belongs to the UPF0391 family.

It localises to the cell membrane. This chain is UPF0391 membrane protein Arad_3976, found in Rhizobium rhizogenes (strain K84 / ATCC BAA-868) (Agrobacterium radiobacter).